Consider the following 123-residue polypeptide: Large ribosomal subunit protein bL12 (123 aa).

This sequence belongs to the bacterial ribosomal protein bL12 family. In terms of assembly, homodimer. Part of the ribosomal stalk of the 50S ribosomal subunit. Forms a multimeric L10(L12)X complex, where L10 forms an elongated spine to which 2 to 4 L12 dimers bind in a sequential fashion. Binds GTP-bound translation factors.

Functionally, forms part of the ribosomal stalk which helps the ribosome interact with GTP-bound translation factors. Is thus essential for accurate translation. This is Large ribosomal subunit protein bL12 from Maricaulis maris (strain MCS10) (Caulobacter maris).